An 882-amino-acid polypeptide reads, in one-letter code: Protein O-mannosyl-transferase TMTC1 (882 aa).

The Cytoplasmic portion of the chain corresponds to 1–20 (MVVTTSARGGGGDRTPSRRR). Residues 1–20 (MVVTTSARGGGGDRTPSRRR) form a disordered region. A helical transmembrane segment spans residues 21-41 (GCGLAPAGAAALLAGASCLCY). At 42 to 110 (GRSLQGEFVH…KLNIFLTGMN (69 aa)) the chain is on the extracellular side. Asn86 carries N-linked (GlcNAc...) asparagine glycosylation. Residues 111–131 (PFYFHAVNIILHCLVTLVLMY) form a helical membrane-spanning segment. At 132 to 137 (TCDKTV) the chain is on the cytoplasmic side. The helical transmembrane segment at 138-157 (FKNRGLAFVTALLFAVHPIH) threads the bilayer. At 158 to 160 (TEA) the chain is on the extracellular side. The helical transmembrane segment at 161-181 (VAGIVGRADVLACLLFLLAFL) threads the bilayer. Over 182–197 (SYNRSLDQGCVGGSFP) the chain is Cytoplasmic. Residues 198–218 (STVSPFFLLLSLFLGTCAMLV) traverse the membrane as a helical segment. At 219 to 221 (KET) the chain is on the extracellular side. Residues 222 to 238 (GITVFGVCLVYDLFSLS) traverse the membrane as a helical segment. The Cytoplasmic segment spans residues 239 to 313 (NKQDKSSNGA…SPRAVWSMMR (75 aa)). The tract at residues 246 to 277 (NGALCPRSPQQPGSPQPSSLPGHPHRENGKQQ) is disordered. Over residues 251 to 267 (PRSPQQPGSPQPSSLPG) the composition is skewed to low complexity. Residues 314 to 334 (FLTYSYLLAFNVWLLLAPVTL) form a helical membrane-spanning segment. The Extracellular segment spans residues 335 to 354 (CYDWQVGSIPLVETIWDMRN). The chain crosses the membrane as a helical span at residues 355-375 (LATIFLAVVMALLSLHCLAAF). Topologically, residues 376–381 (KRLEHK) are cytoplasmic. The chain crosses the membrane as a helical span at residues 382 to 402 (EVLVGLLFLVFPFIPASNLFF). A topological domain (extracellular) is located at residue Arg403. The helical transmembrane segment at 404-424 (VGFVVAERVLYMPSMGYCILF) threads the bilayer. The Cytoplasmic segment spans residues 425-438 (VHGLSKLCTWLNRC). A helical transmembrane segment spans residues 439–459 (GATTLIVSTVLLLLLFSWKTV). Residues 460–882 (KQNEIWLSRE…LQEVREKDQT (423 aa)) are Extracellular-facing. TPR repeat units lie at residues 483–516 (AKVH…YPRH), 517–547 (ASAL…HPQH), 548–581 (NRAL…GPEF), 582–615 (ADAY…CPDS), 616–649 (SDLH…SPSH), 650–682 (HVAM…VAHK), 683–716 (AEIL…QPSQ), 751–784 (LECY…KPKD), 789–822 (SELF…NPDQ), and 823–856 (AQAW…VPDS).

This sequence belongs to the TMTC family. As to quaternary structure, may interact with FAM168B.

It localises to the membrane. It is found in the endoplasmic reticulum. The enzyme catalyses a di-trans,poly-cis-dolichyl beta-D-mannosyl phosphate + L-seryl-[protein] = 3-O-(alpha-D-mannosyl)-L-seryl-[protein] + a di-trans,poly-cis-dolichyl phosphate + H(+). The catalysed reaction is a di-trans,poly-cis-dolichyl beta-D-mannosyl phosphate + L-threonyl-[protein] = 3-O-(alpha-D-mannosyl)-L-threonyl-[protein] + a di-trans,poly-cis-dolichyl phosphate + H(+). Its pathway is protein modification; protein glycosylation. Functionally, transfers mannosyl residues to the hydroxyl group of serine or threonine residues. The 4 members of the TMTC family are O-mannosyl-transferases dedicated primarily to the cadherin superfamily, each member seems to have a distinct role in decorating the cadherin domains with O-linked mannose glycans at specific regions. Also acts as O-mannosyl-transferase on other proteins such as PDIA3. The protein is Protein O-mannosyl-transferase TMTC1 of Homo sapiens (Human).